We begin with the raw amino-acid sequence, 238 residues long: Aerobic respiration control protein ArcA (238 aa).

One can recognise a Response regulatory domain in the interval 5–118 (HILIVEDELV…ELTIRARNLL (114 aa)). A 4-aspartylphosphate modification is found at aspartate 54. The segment at residues 134-234 (VESYKFNGWE…IHGEGYRFCG (101 aa)) is a DNA-binding region (ompR/PhoB-type).

Phosphorylated by ArcB.

Its subcellular location is the cytoplasm. In terms of biological role, member of the two-component regulatory system ArcB/ArcA. Represses a wide variety of aerobic enzymes under anaerobic conditions. It may also be involved in the osmoregulation of envelope proteins. When activated by ArcB, it negatively regulates the expression of genes of aerobic function. Activates the transcription of the plfB operon by binding to its promoter. The sequence is that of Aerobic respiration control protein ArcA (arcA) from Escherichia coli O157:H7.